The chain runs to 279 residues: 4-hydroxy-3-methylbut-2-enyl diphosphate reductase (279 aa).

Position 12 (Cys12) interacts with [4Fe-4S] cluster. Positions 41 and 74 each coordinate (2E)-4-hydroxy-3-methylbut-2-enyl diphosphate. His41 and His74 together coordinate dimethylallyl diphosphate. Isopentenyl diphosphate is bound by residues His41 and His74. Cys96 contacts [4Fe-4S] cluster. Residue His124 coordinates (2E)-4-hydroxy-3-methylbut-2-enyl diphosphate. Residue His124 coordinates dimethylallyl diphosphate. His124 serves as a coordination point for isopentenyl diphosphate. Catalysis depends on Glu126, which acts as the Proton donor. (2E)-4-hydroxy-3-methylbut-2-enyl diphosphate is bound at residue Thr164. Cys192 is a binding site for [4Fe-4S] cluster. Positions 220, 221, 222, and 263 each coordinate (2E)-4-hydroxy-3-methylbut-2-enyl diphosphate. 4 residues coordinate dimethylallyl diphosphate: Ser220, Ser221, Asn222, and Ser263. 4 residues coordinate isopentenyl diphosphate: Ser220, Ser221, Asn222, and Ser263.

Belongs to the IspH family. [4Fe-4S] cluster serves as cofactor.

It catalyses the reaction isopentenyl diphosphate + 2 oxidized [2Fe-2S]-[ferredoxin] + H2O = (2E)-4-hydroxy-3-methylbut-2-enyl diphosphate + 2 reduced [2Fe-2S]-[ferredoxin] + 2 H(+). The catalysed reaction is dimethylallyl diphosphate + 2 oxidized [2Fe-2S]-[ferredoxin] + H2O = (2E)-4-hydroxy-3-methylbut-2-enyl diphosphate + 2 reduced [2Fe-2S]-[ferredoxin] + 2 H(+). Its pathway is isoprenoid biosynthesis; dimethylallyl diphosphate biosynthesis; dimethylallyl diphosphate from (2E)-4-hydroxy-3-methylbutenyl diphosphate: step 1/1. It participates in isoprenoid biosynthesis; isopentenyl diphosphate biosynthesis via DXP pathway; isopentenyl diphosphate from 1-deoxy-D-xylulose 5-phosphate: step 6/6. Functionally, catalyzes the conversion of 1-hydroxy-2-methyl-2-(E)-butenyl 4-diphosphate (HMBPP) into a mixture of isopentenyl diphosphate (IPP) and dimethylallyl diphosphate (DMAPP). Acts in the terminal step of the DOXP/MEP pathway for isoprenoid precursor biosynthesis. The protein is 4-hydroxy-3-methylbut-2-enyl diphosphate reductase of Clostridioides difficile (strain 630) (Peptoclostridium difficile).